A 368-amino-acid polypeptide reads, in one-letter code: Saccharopine dehydrogenase [NAD(+), L-lysine-forming] (368 aa).

L-saccharopine contacts are provided by R18 and K77. The Proton acceptor role is filled by K77. S85 is subject to Phosphoserine. The Proton donor role is filled by H96. Residue Q101 participates in L-saccharopine binding. R130 serves as a coordination point for NAD(+). L-saccharopine-binding residues include R131 and F135. Residues 203 to 204 (GR), D227, T231, Y251, and V278 contribute to the NAD(+) site. A disulfide bridge connects residues C205 and C249. 279–281 (SCD) serves as a coordination point for L-saccharopine. 319–322 (IDHL) lines the NAD(+) pocket.

It belongs to the AlaDH/PNT family. Monomer.

It catalyses the reaction L-saccharopine + NAD(+) + H2O = L-lysine + 2-oxoglutarate + NADH + H(+). Its pathway is amino-acid biosynthesis; L-lysine biosynthesis via AAA pathway; L-lysine from L-alpha-aminoadipate (fungal route): step 3/3. Catalyzes the NAD(+)-dependent cleavage of saccharopine to L-lysine and 2-oxoglutarate, the final step in the alpha-aminoadipate (AAA) pathway for lysin biosynthesis. The polypeptide is Saccharopine dehydrogenase [NAD(+), L-lysine-forming] (Schizosaccharomyces pombe (strain 972 / ATCC 24843) (Fission yeast)).